Consider the following 256-residue polypeptide: Pyridoxine 5'-phosphate synthase (256 aa).

N10 is a 3-amino-2-oxopropyl phosphate binding site. 12–13 provides a ligand contact to 1-deoxy-D-xylulose 5-phosphate; that stretch reads DH. R21 lines the 3-amino-2-oxopropyl phosphate pocket. The active-site Proton acceptor is H46. 1-deoxy-D-xylulose 5-phosphate contacts are provided by R48 and H53. E73 serves as the catalytic Proton acceptor. T103 serves as a coordination point for 1-deoxy-D-xylulose 5-phosphate. Residue H193 is the Proton donor of the active site. 3-amino-2-oxopropyl phosphate contacts are provided by residues G194 and 215–216; that span reads GH.

Belongs to the PNP synthase family. Homooctamer; tetramer of dimers.

It localises to the cytoplasm. It catalyses the reaction 3-amino-2-oxopropyl phosphate + 1-deoxy-D-xylulose 5-phosphate = pyridoxine 5'-phosphate + phosphate + 2 H2O + H(+). It functions in the pathway cofactor biosynthesis; pyridoxine 5'-phosphate biosynthesis; pyridoxine 5'-phosphate from D-erythrose 4-phosphate: step 5/5. Catalyzes the complicated ring closure reaction between the two acyclic compounds 1-deoxy-D-xylulose-5-phosphate (DXP) and 3-amino-2-oxopropyl phosphate (1-amino-acetone-3-phosphate or AAP) to form pyridoxine 5'-phosphate (PNP) and inorganic phosphate. The protein is Pyridoxine 5'-phosphate synthase of Zymomonas mobilis subsp. mobilis (strain ATCC 31821 / ZM4 / CP4).